The primary structure comprises 352 residues: DNA polymerase IV (352 aa).

One can recognise a UmuC domain in the interval 6-187 (IIHIDADCFY…VPVKFISGIG (182 aa)). Mg(2+)-binding residues include aspartate 10 and aspartate 105. Glutamate 106 is a catalytic residue.

This sequence belongs to the DNA polymerase type-Y family. In terms of assembly, monomer. Requires Mg(2+) as cofactor.

Its subcellular location is the cytoplasm. It catalyses the reaction DNA(n) + a 2'-deoxyribonucleoside 5'-triphosphate = DNA(n+1) + diphosphate. Its function is as follows. Poorly processive, error-prone DNA polymerase involved in untargeted mutagenesis. Copies undamaged DNA at stalled replication forks, which arise in vivo from mismatched or misaligned primer ends. These misaligned primers can be extended by PolIV. Exhibits no 3'-5' exonuclease (proofreading) activity. May be involved in translesional synthesis, in conjunction with the beta clamp from PolIII. This is DNA polymerase IV from Marinomonas sp. (strain MWYL1).